The chain runs to 323 residues: MRPGFSPRGGRGGFGDRGGFGGRGGFGDRGGFRGGSRGGFGGRGRGGDRGGRGGFRGGFSSPGRGGPRGGGRGGFGGGRGGFGAGRKVIVEPHRHEGIFICRGKEDALVTKNLVPGESVYGEKRISVEDGEVKTEYRAWNPFRSKIAAAILGGVDQIHIKPGVKVLYLGAASGTTVSHVSDVVGPEGLVYAVEFSHRSGRDLINVAKKRTNIIPVIEDARHPHKYRILVGMVDVVFADVAQPDQTRIVALNAHNFLKNGGHFVISIKANCIDSTAAPEAVFAAEVKKMQQENMKPQEQLTLEPYERDHAVVVGIYRPPPKQKK.

The disordered stretch occupies residues 1-78 (MRPGFSPRGG…GGGRGGFGGG (78 aa)). Gly residues-rich tracts occupy residues 7-44 (PRGGRGGFGDRGGFGGRGGFGDRGGFRGGSRGGFGGRG) and 63-78 (GRGGPRGGGRGGFGGG). 4 positions are modified to asymmetric dimethylarginine: Arg-8, Arg-17, Arg-23, and Arg-29. S-adenosyl-L-methionine is bound by residues 174–175 (TT), 193–194 (EF), 218–219 (DA), and 238–241 (DVAQ). The helical stretch occupies residues 276–308 (APEAVFAAEVKKMQQENMKPQEQLTLEPYERDH).

This sequence belongs to the methyltransferase superfamily. Fibrillarin family. In terms of assembly, component of box C/D small nucleolar ribonucleoprotein (snoRNP) particles. Part of the small subunit (SSU) processome, composed of more than 70 proteins and the RNA chaperone small nucleolar RNA (snoRNA) U3. Post-translationally, by homology to other fibrillarins, some or all of the N-terminal domain arginines are modified to asymmetric dimethylarginine (DMA).

It localises to the nucleus. It is found in the nucleolus. The protein resides in the nucleoplasm. It carries out the reaction L-glutaminyl-[histone H2A] + S-adenosyl-L-methionine = N(5)-methyl-L-glutaminyl-[histone H2A] + S-adenosyl-L-homocysteine + H(+). The enzyme catalyses a ribonucleotide in rRNA + S-adenosyl-L-methionine = a 2'-O-methylribonucleotide in rRNA + S-adenosyl-L-homocysteine + H(+). It catalyses the reaction a ribonucleotide in U6 snRNA + S-adenosyl-L-methionine = a 2'-O-methylribonucleotide in U6 snRNA + S-adenosyl-L-homocysteine + H(+). S-adenosyl-L-methionine-dependent methyltransferase that has the ability to methylate both RNAs and proteins. Involved in pre-rRNA processing by catalyzing the site-specific 2'-hydroxyl methylation of ribose moieties in pre-ribosomal RNA. Probably catalyzes 2'-O-methylation of U6 snRNAs in box C/D RNP complexes. U6 snRNA 2'-O-methylation is required for mRNA splicing fidelity. Also acts as a protein methyltransferase by mediating methylation of 'Gln-105' of histone H2A (H2AQ104me), a modification that impairs binding of the FACT complex and is specifically present at 35S ribosomal DNA locus. Part of the small subunit (SSU) processome, first precursor of the small eukaryotic ribosomal subunit. During the assembly of the SSU processome in the nucleolus, many ribosome biogenesis factors, an RNA chaperone and ribosomal proteins associate with the nascent pre-rRNA and work in concert to generate RNA folding, modifications, rearrangements and cleavage as well as targeted degradation of pre-ribosomal RNA by the RNA exosome. The protein is rRNA 2'-O-methyltransferase fibrillarin (fbl) of Xenopus laevis (African clawed frog).